An 83-amino-acid chain; its full sequence is MFSWMKRGRSKETLKDRLELVLAYDRAQIPPGKVDALRNDLLEVVRRYFPTGNSSVEIEQRGDMVVLMANIPIDDTPPVRKSS.

It belongs to the MinE family.

Prevents the cell division inhibition by proteins MinC and MinD at internal division sites while permitting inhibition at polar sites. This ensures cell division at the proper site by restricting the formation of a division septum at the midpoint of the long axis of the cell. The protein is Cell division topological specificity factor of Deinococcus deserti (strain DSM 17065 / CIP 109153 / LMG 22923 / VCD115).